A 143-amino-acid polypeptide reads, in one-letter code: Monothiol glutaredoxin-5, mitochondrial (143 aa).

Residues 1 to 28 (MFGRISTRALLRPAFTHRIPSVSLSRFL) constitute a mitochondrion transit peptide. One can recognise a Glutaredoxin domain in the interval 33–138 (KQAIESAIES…KLLEDADALV (106 aa)). Lysine 50 serves as a coordination point for glutathione. Cysteine 58 is a [2Fe-2S] cluster binding site. Residues 90–94 (REGVK), isoleucine 102, and 115–116 (CD) each bind glutathione.

The protein belongs to the glutaredoxin family. Monothiol subfamily. Homodimer.

The protein resides in the mitochondrion matrix. Functionally, monothiol glutaredoxin involved in mitochondrial iron-sulfur (Fe/S) cluster transfer. Receives iron-sulfur clusters from scaffold protein ISU1 and mediates their transfer to apoproteins, to the 4Fe/FS cluster biosynthesis machinery, or export from mitochondrion. The polypeptide is Monothiol glutaredoxin-5, mitochondrial (GRX5) (Lachancea kluyveri (Yeast)).